The sequence spans 168 residues: G/U mismatch-specific DNA glycosylase (168 aa).

It belongs to the uracil-DNA glycosylase (UDG) superfamily. TDG/mug family. In terms of assembly, binds DNA as a monomer.

The protein resides in the cytoplasm. It carries out the reaction Specifically hydrolyzes mismatched double-stranded DNA and polynucleotides, releasing free uracil.. In terms of biological role, excises ethenocytosine and uracil, which can arise by alkylation or deamination of cytosine, respectively, from the corresponding mispairs with guanine in ds-DNA. It is capable of hydrolyzing the carbon-nitrogen bond between the sugar-phosphate backbone of the DNA and the mispaired base. The complementary strand guanine functions in substrate recognition. Required for DNA damage lesion repair in stationary-phase cells. The polypeptide is G/U mismatch-specific DNA glycosylase (Shigella dysenteriae serotype 1 (strain Sd197)).